We begin with the raw amino-acid sequence, 255 residues long: Ribosomal RNA small subunit methyltransferase G 2 (255 aa).

Residues glycine 90, phenylalanine 95, and arginine 155 each contribute to the S-adenosyl-L-methionine site. Residues 233 to 245 show a composition bias toward acidic residues; that stretch reads EDEGEELLMDELS. The segment at 233 to 255 is disordered; that stretch reads EDEGEELLMDELSNEEKRRWAKY. Residues 246–255 show a composition bias toward basic and acidic residues; that stretch reads NEEKRRWAKY.

It belongs to the methyltransferase superfamily. RNA methyltransferase RsmG family.

It is found in the cytoplasm. The catalysed reaction is guanosine(527) in 16S rRNA + S-adenosyl-L-methionine = N(7)-methylguanosine(527) in 16S rRNA + S-adenosyl-L-homocysteine. Functionally, specifically methylates the N7 position of guanine in position 527 of 16S rRNA. The protein is Ribosomal RNA small subunit methyltransferase G 2 of Bdellovibrio bacteriovorus (strain ATCC 15356 / DSM 50701 / NCIMB 9529 / HD100).